Consider the following 906-residue polypeptide: Catenin alpha-1 (906 aa).

T2 carries the N-acetylthreonine modification. Residues 2 to 228 (TAVHTGNINF…PILYTASQAC (227 aa)) form an involved in homodimerization region. A Glycyl lysine isopeptide (Lys-Gly) (interchain with G-Cter in SUMO2) cross-link involves residue K57. The interaction with JUP and CTNNB1 stretch occupies residues 97–148 (VRKQCDLMKSAAGEFADDPCSSVKRGNMVRAARALLSAVTRLLILADMADVY). Phosphoserine is present on residues S264, S268, S295, and S297. The tract at residues 325 to 394 (TRDDRRERIV…AVMDHVSDSF (70 aa)) is interaction with alpha-actinin. At T634 the chain carries Phosphothreonine. S641 carries the post-translational modification Phosphoserine. T645 carries the post-translational modification Phosphothreonine. Phosphoserine occurs at positions 652 and 655. T658 bears the Phosphothreonine mark. Residue K797 forms a Glycyl lysine isopeptide (Lys-Gly) (interchain with G-Cter in SUMO2) linkage. S851 is subject to Phosphoserine. Basic and acidic residues predominate over residues 864–880 (PEKKPLVKREKQDETQT). The disordered stretch occupies residues 864–894 (PEKKPLVKREKQDETQTKIKRASQKKHVNPV). A compositionally biased stretch (basic residues) spans 881–891 (KIKRASQKKHV).

The protein belongs to the vinculin/alpha-catenin family. As to quaternary structure, monomer and homodimer; the monomer preferentially binds to CTNNB1 and the homodimer to actin. Component of an cadherin:catenin adhesion complex composed of at least of CDH26, beta-catenin/CTNNB1, alpha-catenin/CTNNA1 and p120 catenin/CTNND1. Possible component of an E-cadherin/ catenin adhesion complex together with E-cadherin/CDH1 and beta-catenin/CTNNB1 or gamma-catenin/JUP; the complex is located to adherens junctions. The stable association of CTNNA1 is controversial as CTNNA1 was shown not to bind to F-actin when assembled in the complex. Alternatively, the CTNNA1-containing complex may be linked to F-actin by other proteins such as LIMA1. Binds AFDN and F-actin. Interacts with ARHGAP21. Interacts with AJUBA. Interacts with LIMA1. Interacts with vinculin/VCL. Interacts with TJP2/ZO2 (via N-terminus). Interacts with TJP1/ZO1 (via N-terminus). Sumoylated. In terms of processing, phosphorylation seems to contribute to the strength of cell-cell adhesion rather than to the basic capacity for cell-cell adhesion.

It localises to the cytoplasm. It is found in the cytoskeleton. Its subcellular location is the cell junction. The protein localises to the adherens junction. The protein resides in the cell membrane. It localises to the nucleus. In terms of biological role, associates with the cytoplasmic domain of a variety of cadherins. The association of catenins to cadherins produces a complex which is linked to the actin filament network, and which seems to be of primary importance for cadherins cell-adhesion properties. Can associate with both E- and N-cadherins. Originally believed to be a stable component of E-cadherin/catenin adhesion complexes and to mediate the linkage of cadherins to the actin cytoskeleton at adherens junctions. In contrast, cortical actin was found to be much more dynamic than E-cadherin/catenin complexes and CTNNA1 was shown not to bind to F-actin when assembled in the complex suggesting a different linkage between actin and adherens junctions components. The homodimeric form may regulate actin filament assembly and inhibit actin branching by competing with the Arp2/3 complex for binding to actin filaments. Involved in the regulation of WWTR1/TAZ, YAP1 and TGFB1-dependent SMAD2 and SMAD3 nuclear accumulation. May play a crucial role in cell differentiation. The polypeptide is Catenin alpha-1 (Bos taurus (Bovine)).